The sequence spans 35 residues: MTLAQFAMTFWHDLAAPILAGIITAAIVGWWRNRK.

Residues 10 to 30 (FWHDLAAPILAGIITAAIVGW) traverse the membrane as a helical segment.

Belongs to the Ldr toxic peptide family.

The protein resides in the cell inner membrane. Functionally, toxic component of a type I toxin-antitoxin (TA) system. Overexpression causes rapid cell killing, probably by disrupting the cell inner membrane and disruption of ATP synthesis. This Escherichia coli (strain K12) protein is Small toxic polypeptide LdrB (ldrB).